The chain runs to 363 residues: 3-isopropylmalate dehydrogenase (363 aa).

78 to 91 (GPKWEHLPPDQQPE) is an NAD(+) binding site. The substrate site is built by arginine 99, arginine 109, arginine 138, and aspartate 227. Mg(2+) is bound by residues aspartate 227, aspartate 251, and aspartate 255. 285-297 (GSAPDITGKNIAN) provides a ligand contact to NAD(+).

The protein belongs to the isocitrate and isopropylmalate dehydrogenases family. LeuB type 1 subfamily. In terms of assembly, homodimer. It depends on Mg(2+) as a cofactor. The cofactor is Mn(2+).

It is found in the cytoplasm. It carries out the reaction (2R,3S)-3-isopropylmalate + NAD(+) = 4-methyl-2-oxopentanoate + CO2 + NADH. It participates in amino-acid biosynthesis; L-leucine biosynthesis; L-leucine from 3-methyl-2-oxobutanoate: step 3/4. Its function is as follows. Catalyzes the oxidation of 3-carboxy-2-hydroxy-4-methylpentanoate (3-isopropylmalate) to 3-carboxy-4-methyl-2-oxopentanoate. The product decarboxylates to 4-methyl-2 oxopentanoate. The polypeptide is 3-isopropylmalate dehydrogenase (Shigella boydii serotype 4 (strain Sb227)).